The sequence spans 143 residues: Large-conductance mechanosensitive channel (143 aa).

The next 2 helical transmembrane spans lie at 19–39 and 81–101; these read VGVIIGAAFGAIVTSMVGDLI and GSFLTITLNFLIVAGVLFGVI.

This sequence belongs to the MscL family. As to quaternary structure, homopentamer.

It localises to the cell inner membrane. In terms of biological role, channel that opens in response to stretch forces in the membrane lipid bilayer. May participate in the regulation of osmotic pressure changes within the cell. The protein is Large-conductance mechanosensitive channel of Rhodopseudomonas palustris (strain BisB5).